The primary structure comprises 173 residues: Bifunctional protein PyrR (173 aa).

The short motif at 94 to 106 is the PRPP-binding element; it reads VILIDDVLYTGRT.

This sequence belongs to the purine/pyrimidine phosphoribosyltransferase family. PyrR subfamily. In terms of assembly, homodimer and homohexamer; in equilibrium.

It catalyses the reaction UMP + diphosphate = 5-phospho-alpha-D-ribose 1-diphosphate + uracil. Functionally, regulates transcriptional attenuation of the pyrimidine nucleotide (pyr) operon by binding in a uridine-dependent manner to specific sites on pyr mRNA. This disrupts an antiterminator hairpin in the RNA and favors formation of a downstream transcription terminator, leading to a reduced expression of downstream genes. In terms of biological role, also displays a weak uracil phosphoribosyltransferase activity which is not physiologically significant. This chain is Bifunctional protein PyrR, found in Streptococcus gordonii (strain Challis / ATCC 35105 / BCRC 15272 / CH1 / DL1 / V288).